Consider the following 924-residue polypeptide: MQIPKYENKPFKPPRRVGSNKYTQLKPTATAVTTAPISKAKVTVNLKRSISAGPTLNLAKKPNNLSSNENTRYFTIMYRKPTTKKHKTWSGDGYATLKASSDKLCFYNEAGKFFGSSMLPSDSDSLFETLFKAGSNEVQLDYELKENAEIRSAKEALSQNMGNPNPPTTSTTETVPSTKNDGGKYQMPLSQLFSLNTVKRFKSVTKQTNEHMTTVPKTSQNSKAKKYYPVFDVNKIDNPIVMNKNAAAEVDVIVDPLLGKFLRPHQREGVKFMYDCLMGLARPTIENPDIDCTTKSLVLENDSDISGCLLADDMGLGKTLMSITLIWTLIRQTPFASKVSCSQSGIPLTGLCKKILVVCPVTLIGNWKREFGKWLNLSRIGVLTLSSRNSPDMDKMAVRNFLKVQRIYQVLIIGYEKLLSVSEELEKNKHLIDMLVCDEGHRLKNGASKILNTLKSLDIRRKLLLTGTPIQNDLNEFFTIIDFINPGILGSFASFKRRFIIPITRARDTANRYNEELLEKGEERSKEMIEITKRFILRRTNAILEKYLPPKTDIILFCKPYSQQILAFKDILQGARLDFGQLTFSSSLGLITLLKKVCNSPGLVGSDPYYKSHIKDTQSQDSYSRSLNSGKLRVLMTLLEGIRKGTKEKVVVVSNYTQTLDIIENLMNMAGMSHCRLDGSIPAKQRDSIVTSFNRNPAIFGFLLSAKSGGVGLNLVGASRLILFDNDWNPSVDLQAMSRIHRDGQKKPCFIYRLVTTGCIDEKILQRQLMKNSLSQKFLGDSEMRNKESSNDDLFNKEDLKDLFSVHTDTKSNTHDLICSCDGLGEEIEYPETNQQQNTVELRKRSTTTWTSALDLQKKMNEAATNDDAKKSQYIRQCLVHYKHIDPARQDELFDEVITDSFTDLKDSITFAFVKPGEICLREQ.

Positions 1-10 (MQIPKYENKP) are enriched in basic and acidic residues. Disordered regions lie at residues 1-21 (MQIP…GSNK) and 155-182 (EALS…KNDG). Residues 168–178 (TTSTTETVPST) show a composition bias toward low complexity. One can recognise a Helicase ATP-binding domain in the interval 299–487 (LENDSDISGC…FTIIDFINPG (189 aa)). ATP is bound at residue 346–353 (IPLTGLCK). The DEGH box motif lies at 472–475 (NDLN). A Glycyl lysine isopeptide (Lys-Gly) (interchain with G-Cter in ubiquitin) cross-link involves residue Lys615. Residues 631–790 (KLRVLMTLLE…DSEMRNKESS (160 aa)) enclose the Helicase C-terminal domain.

Belongs to the SNF2/RAD54 helicase family. Interacts with RAD51 and DMC1.

Its subcellular location is the nucleus. It catalyses the reaction ATP + H2O = ADP + phosphate + H(+). Its function is as follows. Involved in the recombinational repair of double-strand breaks (DSB) in DNA during mitosis and meiosis. Has DNA dependent ATPase activity. Promotes D-loop (displacement loop) formation with RAD51 recombinase. Modifies the topology of double-stranded DNA during the D-loop reaction to facilitate the invasion of the homologous duplex molecule by the initiating single-stranded DNA substrate. Required for adaptation from G2/M checkpoint arrest induced by a double strand break, by participating in monitoring the extent of single-stranded DNA produced by resection of DNA ends. This role is distinct from its roles in recombination. Promotes colocalization of RAD51 and DMC1 during meiotic recombination. Involved in crossover interference. The protein is DNA repair and recombination protein RDH54 (RDH54) of Saccharomyces cerevisiae (strain AWRI1631) (Baker's yeast).